An 86-amino-acid chain; its full sequence is MVTKEEILKKVQSIVSEQLGISKEQVLVDSHFTNDLGADSLDNVELVMAIEEEFNIVISDIDAEKISNVREAVEFIIDKINNKANA.

Positions 5-80 constitute a Carrier domain; it reads EEILKKVQSI…EAVEFIIDKI (76 aa). Serine 40 is subject to O-(pantetheine 4'-phosphoryl)serine.

This sequence belongs to the acyl carrier protein (ACP) family. Post-translationally, 4'-phosphopantetheine is transferred from CoA to a specific serine of apo-ACP by AcpS. This modification is essential for activity because fatty acids are bound in thioester linkage to the sulfhydryl of the prosthetic group.

It localises to the plastid. The protein localises to the chloroplast. Its pathway is lipid metabolism; fatty acid biosynthesis. In terms of biological role, carrier of the growing fatty acid chain in fatty acid biosynthesis. In Cyanidium caldarium (Red alga), this protein is Acyl carrier protein.